Here is a 193-residue protein sequence, read N- to C-terminus: Orotate phosphoribosyltransferase (193 aa).

5-phospho-alpha-D-ribose 1-diphosphate contacts are provided by residues Arg-102, Lys-103, Lys-106, His-108, and Glu-129–Ser-137. 2 residues coordinate orotate: Thr-133 and Arg-161.

This sequence belongs to the purine/pyrimidine phosphoribosyltransferase family. PyrE subfamily. As to quaternary structure, homodimer. It depends on Mg(2+) as a cofactor.

The catalysed reaction is orotidine 5'-phosphate + diphosphate = orotate + 5-phospho-alpha-D-ribose 1-diphosphate. Its pathway is pyrimidine metabolism; UMP biosynthesis via de novo pathway; UMP from orotate: step 1/2. Catalyzes the transfer of a ribosyl phosphate group from 5-phosphoribose 1-diphosphate to orotate, leading to the formation of orotidine monophosphate (OMP). The chain is Orotate phosphoribosyltransferase from Prochlorococcus marinus (strain NATL1A).